A 37-amino-acid chain; its full sequence is Large ribosomal subunit protein bL36 (37 aa).

This sequence belongs to the bacterial ribosomal protein bL36 family.

In Nostoc punctiforme (strain ATCC 29133 / PCC 73102), this protein is Large ribosomal subunit protein bL36.